A 227-amino-acid chain; its full sequence is ATP synthase F(0) complex subunit a (227 aa).

The next 6 membrane-spanning stretches (helical) occupy residues tyrosine 14–proline 34, tryptophan 69–leucine 89, glutamine 98–leucine 118, glutamate 132–isoleucine 152, valine 179–leucine 199, and leucine 202–tyrosine 222.

It belongs to the ATPase A chain family. Component of the ATP synthase complex composed at least of ATP5F1A/subunit alpha, ATP5F1B/subunit beta, ATP5MC1/subunit c (homooctomer), MT-ATP6/subunit a, MT-ATP8/subunit 8, ATP5ME/subunit e, ATP5MF/subunit f, ATP5MG/subunit g, ATP5MK/subunit k, ATP5MJ/subunit j, ATP5F1C/subunit gamma, ATP5F1D/subunit delta, ATP5F1E/subunit epsilon, ATP5PF/subunit F6, ATP5PB/subunit b, ATP5PD/subunit d, ATP5PO/subunit OSCP. ATP synthase complex consists of a soluble F(1) head domain (subunits alpha(3) and beta(3)) - the catalytic core - and a membrane F(0) domain - the membrane proton channel (subunits c, a, 8, e, f, g, k and j). These two domains are linked by a central stalk (subunits gamma, delta, and epsilon) rotating inside the F1 region and a stationary peripheral stalk (subunits F6, b, d, and OSCP). Interacts with DNAJC30; interaction is direct.

It is found in the mitochondrion inner membrane. The enzyme catalyses H(+)(in) = H(+)(out). Its function is as follows. Subunit a, of the mitochondrial membrane ATP synthase complex (F(1)F(0) ATP synthase or Complex V) that produces ATP from ADP in the presence of a proton gradient across the membrane which is generated by electron transport complexes of the respiratory chain. ATP synthase complex consist of a soluble F(1) head domain - the catalytic core - and a membrane F(1) domain - the membrane proton channel. These two domains are linked by a central stalk rotating inside the F(1) region and a stationary peripheral stalk. During catalysis, ATP synthesis in the catalytic domain of F(1) is coupled via a rotary mechanism of the central stalk subunits to proton translocation. With the subunit c (ATP5MC1), forms the proton-conducting channel in the F(0) domain, that contains two crucial half-channels (inlet and outlet) that facilitate proton movement from the mitochondrial intermembrane space (IMS) into the matrix. Protons are taken up via the inlet half-channel and released through the outlet half-channel, following a Grotthuss mechanism. In Formosania lacustris (Oriental stream loach), this protein is ATP synthase F(0) complex subunit a.